Consider the following 80-residue polypeptide: Acyl carrier protein (80 aa).

Residues 4 to 79 enclose the Carrier domain; sequence DEIFSKVRSI…DVVNFIKKRK (76 aa). At Ser39 the chain carries O-(pantetheine 4'-phosphoryl)serine.

This sequence belongs to the acyl carrier protein (ACP) family. 4'-phosphopantetheine is transferred from CoA to a specific serine of apo-ACP by AcpS. This modification is essential for activity because fatty acids are bound in thioester linkage to the sulfhydryl of the prosthetic group.

The protein resides in the cytoplasm. It functions in the pathway lipid metabolism; fatty acid biosynthesis. Functionally, carrier of the growing fatty acid chain in fatty acid biosynthesis. The polypeptide is Acyl carrier protein (Borrelia garinii subsp. bavariensis (strain ATCC BAA-2496 / DSM 23469 / PBi) (Borreliella bavariensis)).